Here is a 592-residue protein sequence, read N- to C-terminus: PiggyBac transposable element-derived protein 2 (592 aa).

The interval 31–69 is disordered; the sequence is EEEESNNNREEIFIAPPDNAAGEFTDEDSGDEDSQRGAH.

This is PiggyBac transposable element-derived protein 2 (PGBD2) from Homo sapiens (Human).